Reading from the N-terminus, the 264-residue chain is Membrane-spanning 4-domains subfamily A member 10 (264 aa).

Over 1 to 57 (MKAEATVIPSRCARGQTTAAPGVQPWQTSVPQNTTQPKLLAPRQHEKSQKRSSLLKE) the chain is Cytoplasmic. Over residues 17–37 (TTAAPGVQPWQTSVPQNTTQP) the composition is skewed to polar residues. Positions 17-48 (TTAAPGVQPWQTSVPQNTTQPKLLAPRQHEKS) are disordered. A helical transmembrane segment spans residues 58–78 (LGAFHITIALLHLVFGGYLAS). Topologically, residues 79–89 (TVKSLHLVVLK) are extracellular. A helical transmembrane segment spans residues 90–110 (SWYPFWGAASFLISGILAITM). At 111-119 (KTFSKTYLK) the chain is on the cytoplasmic side. The chain crosses the membrane as a helical span at residues 120 to 140 (MLCLMTNLVSLFCVLSGLFVI). Over 141–169 (SKDLFLESPFESPIWRMYPNSTVHIQRLE) the chain is Extracellular. A helical membrane pass occupies residues 170–190 (LALLCFTVLELFLPVPTAVTA). The Cytoplasmic segment spans residues 191-264 (WRDRPSAKND…GAGIWTQTAN (74 aa)).

The protein belongs to the MS4A family.

The protein resides in the membrane. In terms of biological role, may be involved in signal transduction as a component of a multimeric receptor complex. The polypeptide is Membrane-spanning 4-domains subfamily A member 10 (MS4A10) (Pongo abelii (Sumatran orangutan)).